The chain runs to 116 residues: Protein lin-52 homolog (116 aa).

Serine 28 and serine 53 each carry phosphoserine.

It belongs to the lin-52 family. Component of the DREAM complex (also named LINC complex) at least composed of E2F4, E2F5, LIN9, LIN37, LIN52, LIN54, MYBL1, MYBL2, RBL1, RBL2, RBBP4, TFDP1 and TFDP2. The complex exists in quiescent cells where it represses cell cycle-dependent genes. It dissociates in S phase when LIN9, LIN37, LIN52 and LIN54 form a subcomplex that binds to MYBL2.

This chain is Protein lin-52 homolog (LIN52), found in Homo sapiens (Human).